We begin with the raw amino-acid sequence, 503 residues long: Maturase K (503 aa).

Belongs to the intron maturase 2 family. MatK subfamily.

The protein resides in the plastid. It localises to the chloroplast. In terms of biological role, usually encoded in the trnK tRNA gene intron. Probably assists in splicing its own and other chloroplast group II introns. The sequence is that of Maturase K from Liquidambar styraciflua (Sweetgum tree).